A 396-amino-acid chain; its full sequence is E3 ubiquitin-protein transferase MAEA (396 aa).

Residues 1-124 (MAVQESAAQL…AAASVWKRKR (124 aa)) form an extracellular and involved in cell to cell contact region. The residue at position 28 (Thr-28) is a Phosphothreonine. The LisH domain occupies 121 to 153 (KRKRMDRMMVEHLLRCGYYNTAVKLARQSGIED). In terms of domain architecture, CTLH spans 159 to 216 (MFLTAKEVEESLERRETATCLAWCHDNKSRLRKMKSCLEFSLRIQEFIELIRQNKRLD). The RING-Gid-type zinc finger occupies 314 to 381 (CPVCSRSLNK…QDDKVVCPRT (68 aa)).

In terms of assembly, identified in the CTLH complex that contains GID4, RANBP9 and/or RANBP10, MKLN1, MAEA, RMND5A (or alternatively its paralog RMND5B), GID8, ARMC8, WDR26 and YPEL5. Within this complex, MAEA, RMND5A (or alternatively its paralog RMND5B), GID8, WDR26, and RANBP9 and/or RANBP10 form the catalytic core, while GID4, MKLN1, ARMC8 and YPEL5 have ancillary roles. Interacts with F-actin. Post-translationally, autoubiquitinated as component of the CTLH E3 ubiquitin-protein ligase complex (in vitro).

The protein localises to the cytoplasm. Its subcellular location is the nucleus. It is found in the nucleoplasm. It localises to the nucleus matrix. The protein resides in the cell membrane. The protein localises to the cytoskeleton. The catalysed reaction is S-ubiquitinyl-[E2 ubiquitin-conjugating enzyme]-L-cysteine + [acceptor protein]-L-lysine = [E2 ubiquitin-conjugating enzyme]-L-cysteine + N(6)-ubiquitinyl-[acceptor protein]-L-lysine.. Its function is as follows. Core component of the CTLH E3 ubiquitin-protein ligase complex that selectively accepts ubiquitin from UBE2H and mediates ubiquitination and subsequent proteasomal degradation of the transcription factor HBP1. MAEA and RMND5A are both required for catalytic activity of the CTLH E3 ubiquitin-protein ligase complex. MAEA is required for normal cell proliferation. The CTLH E3 ubiquitin-protein ligase complex is not required for the degradation of enzymes involved in gluconeogenesis, such as FBP1. Plays a role in erythroblast enucleation during erythrocyte maturation and in the development of mature macrophages. Mediates the attachment of erythroid cell to mature macrophages; this MAEA-mediated contact inhibits erythroid cell apoptosis. Participates in erythroblastic island formation, which is the functional unit of definitive erythropoiesis. Associates with F-actin to regulate actin distribution in erythroblasts and macrophages. May contribute to nuclear architecture and cells division events. This is E3 ubiquitin-protein transferase MAEA (MAEA) from Pongo abelii (Sumatran orangutan).